Here is a 355-residue protein sequence, read N- to C-terminus: Uroporphyrinogen decarboxylase (355 aa).

Residues 27–31 (RQAGR), Asp78, Tyr155, Ser210, and His328 each bind substrate.

It belongs to the uroporphyrinogen decarboxylase family. In terms of assembly, homodimer.

Its subcellular location is the cytoplasm. It catalyses the reaction uroporphyrinogen III + 4 H(+) = coproporphyrinogen III + 4 CO2. It functions in the pathway porphyrin-containing compound metabolism; protoporphyrin-IX biosynthesis; coproporphyrinogen-III from 5-aminolevulinate: step 4/4. Catalyzes the decarboxylation of four acetate groups of uroporphyrinogen-III to yield coproporphyrinogen-III. The polypeptide is Uroporphyrinogen decarboxylase (Azotobacter vinelandii (strain DJ / ATCC BAA-1303)).